Reading from the N-terminus, the 107-residue chain is uncharacterized protein (107 aa).

This is an uncharacterized protein from Acanthamoeba polyphaga mimivirus (APMV).